An 80-amino-acid polypeptide reads, in one-letter code: Acyl carrier protein (80 aa).

A Carrier domain is found at 4 to 79; the sequence is EDIFSKVKDI…DAVDFIASKA (76 aa). At Ser39 the chain carries O-(pantetheine 4'-phosphoryl)serine.

The protein belongs to the acyl carrier protein (ACP) family. Post-translationally, 4'-phosphopantetheine is transferred from CoA to a specific serine of apo-ACP by AcpS. This modification is essential for activity because fatty acids are bound in thioester linkage to the sulfhydryl of the prosthetic group.

It localises to the cytoplasm. It participates in lipid metabolism; fatty acid biosynthesis. Carrier of the growing fatty acid chain in fatty acid biosynthesis. The polypeptide is Acyl carrier protein (Synechococcus elongatus (strain ATCC 33912 / PCC 7942 / FACHB-805) (Anacystis nidulans R2)).